Here is a 405-residue protein sequence, read N- to C-terminus: Nodal homolog 2-A (405 aa).

Positions 1-18 are cleaved as a signal peptide; the sequence is MASLGVILFFVIASLIHG. The propeptide occupies 19–282; that stretch reads KPIHSERKAA…RVTDTRRPRR (264 aa). N-linked (GlcNAc...) asparagine glycosylation is found at Asn71, Asn172, and Asn343. Cystine bridges form between Cys305-Cys371, Cys334-Cys402, and Cys338-Cys404.

Belongs to the TGF-beta family. As to quaternary structure, homodimer; disulfide-linked. Forms heterodimers with the TGF-beta family member derriere. Interacts with tsku; enhances nodal2 activity. In terms of tissue distribution, first localized to the vegetal region of the blastula. Just prior to gastrulation (stage 10), this expression disappears and instead becomes localized to the dorsal marginal zone, with enrichment in the organizer.

It localises to the secreted. Functionally, cooperation and regulatory loops of multiple nodals are essential for mesendoderm patterning in early embryos. Essential for mesoderm formation and axial patterning during embryonic development. Activates the activin-like signaling pathway to induce dorsal and ventral mesoderm in animal cap ectoderm. In addition, also dorsalizes ventral marginal zone (VMZ) tissues during gastrulation. Induces muscle actin. Appears to act as both a short-range and long-range morphogen. The unprocessed protein inhibits bmp- and wnt-signaling. The polypeptide is Nodal homolog 2-A (nodal2-a) (Xenopus laevis (African clawed frog)).